Reading from the N-terminus, the 457-residue chain is Argininosuccinate lyase (457 aa).

The protein belongs to the lyase 1 family. Argininosuccinate lyase subfamily.

The protein resides in the cytoplasm. The enzyme catalyses 2-(N(omega)-L-arginino)succinate = fumarate + L-arginine. Its pathway is amino-acid biosynthesis; L-arginine biosynthesis; L-arginine from L-ornithine and carbamoyl phosphate: step 3/3. The protein is Argininosuccinate lyase of Pasteurella multocida (strain Pm70).